The following is a 357-amino-acid chain: RNA 3'-terminal phosphate cyclase (357 aa).

ATP contacts are provided by residues glutamine 102 and 293 to 296 (HMGD). Catalysis depends on histidine 319, which acts as the Tele-AMP-histidine intermediate.

Belongs to the RNA 3'-terminal cyclase family. Type 1 subfamily.

It is found in the cytoplasm. It catalyses the reaction a 3'-end 3'-phospho-ribonucleotide-RNA + ATP = a 3'-end 2',3'-cyclophospho-ribonucleotide-RNA + AMP + diphosphate. In terms of biological role, catalyzes the conversion of 3'-phosphate to a 2',3'-cyclic phosphodiester at the end of RNA. The mechanism of action of the enzyme occurs in 3 steps: (A) adenylation of the enzyme by ATP; (B) transfer of adenylate to an RNA-N3'P to produce RNA-N3'PP5'A; (C) and attack of the adjacent 2'-hydroxyl on the 3'-phosphorus in the diester linkage to produce the cyclic end product. The biological role of this enzyme is unknown but it is likely to function in some aspects of cellular RNA processing. The chain is RNA 3'-terminal phosphate cyclase from Desulfurococcus amylolyticus (strain DSM 18924 / JCM 16383 / VKM B-2413 / 1221n) (Desulfurococcus kamchatkensis).